A 157-amino-acid chain; its full sequence is MAFTLEDMTEEEFEAFRGMSVQNFAKQNITSGTWTEKEAFEKSEQAYENMIPNGRDSSNHYFWNITNDQGERMGWLWLYADPLHPQKEAFIYSFGLYEAFRGKGLAQLALQTLDERARELGAERLALHVFAHNETAVYLYQKMGYAMTNIRMRKQLC.

One can recognise an N-acetyltransferase domain in the interval 3 to 157; it reads FTLEDMTEEE…TNIRMRKQLC (155 aa).

This sequence belongs to the acetyltransferase family.

This is an uncharacterized protein from Bacillus subtilis (strain 168).